The sequence spans 143 residues: Flagellar assembly factor FliW (143 aa).

The protein belongs to the FliW family. Interacts with translational regulator CsrA and flagellin(s).

Its subcellular location is the cytoplasm. Acts as an anti-CsrA protein, binds CsrA and prevents it from repressing translation of its target genes, one of which is flagellin. Binds to flagellin and participates in the assembly of the flagellum. In Clostridium botulinum (strain 657 / Type Ba4), this protein is Flagellar assembly factor FliW.